The sequence spans 363 residues: S-adenosylmethionine:tRNA ribosyltransferase-isomerase (363 aa).

Belongs to the QueA family. In terms of assembly, monomer.

The protein resides in the cytoplasm. The enzyme catalyses 7-aminomethyl-7-carbaguanosine(34) in tRNA + S-adenosyl-L-methionine = epoxyqueuosine(34) in tRNA + adenine + L-methionine + 2 H(+). It participates in tRNA modification; tRNA-queuosine biosynthesis. In terms of biological role, transfers and isomerizes the ribose moiety from AdoMet to the 7-aminomethyl group of 7-deazaguanine (preQ1-tRNA) to give epoxyqueuosine (oQ-tRNA). The polypeptide is S-adenosylmethionine:tRNA ribosyltransferase-isomerase (Haemophilus influenzae (strain 86-028NP)).